Here is a 1595-residue protein sequence, read N- to C-terminus: DNA-directed RNA polymerase subunit beta'' (1595 aa).

Positions 216, 286, 294, and 297 each coordinate Zn(2+).

This sequence belongs to the RNA polymerase beta' chain family. RpoC2 subfamily. In plastids the minimal PEP RNA polymerase catalytic core is composed of four subunits: alpha, beta, beta', and beta''. When a (nuclear-encoded) sigma factor is associated with the core the holoenzyme is formed, which can initiate transcription. Zn(2+) serves as cofactor.

The protein resides in the plastid. It localises to the chloroplast. The enzyme catalyses RNA(n) + a ribonucleoside 5'-triphosphate = RNA(n+1) + diphosphate. DNA-dependent RNA polymerase catalyzes the transcription of DNA into RNA using the four ribonucleoside triphosphates as substrates. The chain is DNA-directed RNA polymerase subunit beta'' from Bigelowiella natans (Pedinomonas minutissima).